The primary structure comprises 269 residues: Phosphatidylglycerol--prolipoprotein diacylglyceryl transferase (269 aa).

The next 7 membrane-spanning stretches (helical) occupy residues 10 to 30 (VALA…LIGI), 56 to 76 (MVFW…VLFY), 92 to 112 (WKGG…AWWF), 120 to 140 (FFEL…AGRI), 174 to 194 (PSQL…LWLF), 202 to 222 (MAVS…VEFV), and 237 to 257 (LTMG…LIWL). Arginine 139 serves as a coordination point for a 1,2-diacyl-sn-glycero-3-phospho-(1'-sn-glycerol).

The protein belongs to the Lgt family.

It localises to the cell inner membrane. It catalyses the reaction L-cysteinyl-[prolipoprotein] + a 1,2-diacyl-sn-glycero-3-phospho-(1'-sn-glycerol) = an S-1,2-diacyl-sn-glyceryl-L-cysteinyl-[prolipoprotein] + sn-glycerol 1-phosphate + H(+). It participates in protein modification; lipoprotein biosynthesis (diacylglyceryl transfer). Its function is as follows. Catalyzes the transfer of the diacylglyceryl group from phosphatidylglycerol to the sulfhydryl group of the N-terminal cysteine of a prolipoprotein, the first step in the formation of mature lipoproteins. The protein is Phosphatidylglycerol--prolipoprotein diacylglyceryl transferase of Pseudomonas fluorescens (strain ATCC BAA-477 / NRRL B-23932 / Pf-5).